A 56-amino-acid chain; its full sequence is MASKSTELRPIVKLKSTAGTGYTYVTRKNRRNDPDRMVLRKYDPVVRKHVDFREER.

This sequence belongs to the bacterial ribosomal protein bL33 family.

This is Large ribosomal subunit protein bL33A from Nocardia farcinica (strain IFM 10152).